Here is a 504-residue protein sequence, read N- to C-terminus: UDP-GalNAc:beta-1,3-N-acetylgalactosaminyltransferase 2 (504 aa).

The Cytoplasmic portion of the chain corresponds to 1 to 3 (MRN). A helical; Signal-anchor for type II membrane protein transmembrane segment spans residues 4-24 (WLVLLCPCVLGAALHLWHLWL). At 25 to 504 (RSPPDPHNTG…DPCQCEAKVR (480 aa)) the chain is on the lumenal side. Asn-117 and Asn-176 each carry an N-linked (GlcNAc...) asparagine glycan.

It belongs to the glycosyltransferase 31 family. In terms of processing, N-glycosylated. In terms of tissue distribution, present in testis (at protein level). In testis, it is mainly detected in the middle layers of seminiferous tubules at stages XII to II. Strongly expressed in primary and secondary spermatocytes and early round spermatids, but not in spermatogonia, elongating or elongated spermatids, or in Leydig or Sertoli cells.

It localises to the golgi apparatus membrane. The protein resides in the endoplasmic reticulum. The enzyme catalyses 3-O-(N-acetyl-beta-D-glucosaminyl-(1-&gt;4)-alpha-D-mannosyl)-L-threonyl-[protein] + UDP-N-acetyl-alpha-D-galactosamine = 3-O-[beta-D-GalNAc-(1-&gt;3)-beta-D-GlcNAc-(1-&gt;4)-alpha-D-Man]-L-Thr-[protein] + UDP + H(+). It participates in protein modification; protein glycosylation. In terms of biological role, beta-1,3-N-acetylgalactosaminyltransferase that synthesizes a unique carbohydrate structure, GalNAc-beta-1-3GlcNAc, on N- and O-glycans. Has no galactose nor galactosaminyl transferase activity toward any acceptor substrate. Involved in alpha-dystroglycan (DAG1) glycosylation: acts coordinately with GTDC2/POMGnT2 to synthesize a GalNAc-beta3-GlcNAc-beta-terminus at the 4-position of protein O-mannose in the biosynthesis of the phosphorylated O-mannosyl trisaccharide (N-acetylgalactosamine-beta-3-N-acetylglucosamine-beta-4-(phosphate-6-)mannose), a carbohydrate structure present in alpha-dystroglycan, which is required for binding laminin G-like domain-containing extracellular proteins with high affinity. The polypeptide is UDP-GalNAc:beta-1,3-N-acetylgalactosaminyltransferase 2 (B3galnt2) (Mus musculus (Mouse)).